The following is a 191-amino-acid chain: Signal peptidase complex catalytic subunit sec11 (191 aa).

Over 1–18 (MLSFLSSNLSNVRQSLAQ) the chain is Cytoplasmic. A helical; Signal-anchor for type II membrane protein membrane pass occupies residues 19–39 (VLNFALVLSTAFMMWKGLSVF). At 40–191 (TASSSPVVVV…MGLMVMLQRE (152 aa)) the chain is on the lumenal side. Active-site charge relay system residues include S53, H92, and D133. Positions 177-188 (ALLGIMGLMVML) are C-terminal short (CTS) helix.

The protein belongs to the peptidase S26B family. As to quaternary structure, component of the signal peptidase complex (SPC) composed of a catalytic subunit SEC11 and three accessory subunits SPC1, SPC2 and SPC3. The complex induces a local thinning of the ER membrane which is used to measure the length of the signal peptide (SP) h-region of protein substrates. This ensures the selectivity of the complex towards h-regions shorter than 18-20 amino acids. SPC associates with the translocon complex.

The protein resides in the endoplasmic reticulum membrane. The catalysed reaction is Cleavage of hydrophobic, N-terminal signal or leader sequences from secreted and periplasmic proteins.. Its function is as follows. Catalytic component of the signal peptidase complex (SPC) which catalyzes the cleavage of N-terminal signal sequences from nascent proteins as they are translocated into the lumen of the endoplasmic reticulum. Specifically cleaves N-terminal signal peptides that contain a hydrophobic alpha-helix (h-region) shorter than 18-20 amino acids. The protein is Signal peptidase complex catalytic subunit sec11 (sec11) of Aspergillus oryzae (strain ATCC 42149 / RIB 40) (Yellow koji mold).